We begin with the raw amino-acid sequence, 125 residues long: Probable 4-amino-4-deoxy-L-arabinose-phosphoundecaprenol flippase subunit ArnF (125 aa).

The Cytoplasmic segment spans residues 1-2 (MG). A helical membrane pass occupies residues 3–23 (VMWGLISVAIASLAQLSLGFA). Over 24 to 33 (MMRLPSIAHP) the chain is Periplasmic. A helical membrane pass occupies residues 34 to 54 (LAFISGLGALNAATLALFAGL). The Cytoplasmic segment spans residues 55-76 (AGYLVSVFCWHKTLHTLALSKA). A helical membrane pass occupies residues 77 to 97 (YALLSLSYVLVWVASMLLPGL). Over 98 to 100 (QGA) the chain is Periplasmic. The chain crosses the membrane as a helical span at residues 101 to 121 (FSLKAMLGVLCIMAGVMLIFL). Residues 122–125 (PARS) lie on the Cytoplasmic side of the membrane.

Belongs to the ArnF family. Heterodimer of ArnE and ArnF.

It localises to the cell inner membrane. Its pathway is bacterial outer membrane biogenesis; lipopolysaccharide biosynthesis. In terms of biological role, translocates 4-amino-4-deoxy-L-arabinose-phosphoundecaprenol (alpha-L-Ara4N-phosphoundecaprenol) from the cytoplasmic to the periplasmic side of the inner membrane. This chain is Probable 4-amino-4-deoxy-L-arabinose-phosphoundecaprenol flippase subunit ArnF, found in Salmonella agona (strain SL483).